The primary structure comprises 435 residues: UDP-N-acetylmuramoylalanine--D-glutamate ligase (435 aa).

Gly-114–Thr-120 serves as a coordination point for ATP.

The protein belongs to the MurCDEF family.

Its subcellular location is the cytoplasm. The enzyme catalyses UDP-N-acetyl-alpha-D-muramoyl-L-alanine + D-glutamate + ATP = UDP-N-acetyl-alpha-D-muramoyl-L-alanyl-D-glutamate + ADP + phosphate + H(+). The protein operates within cell wall biogenesis; peptidoglycan biosynthesis. Functionally, cell wall formation. Catalyzes the addition of glutamate to the nucleotide precursor UDP-N-acetylmuramoyl-L-alanine (UMA). This chain is UDP-N-acetylmuramoylalanine--D-glutamate ligase, found in Haemophilus ducreyi (strain 35000HP / ATCC 700724).